The sequence spans 184 residues: Thiosulfate dehydrogenase [quinone] large subunit (184 aa).

Helical transmembrane passes span 21–38, 86–106, 109–129, and 137–157; these read LFPVRFAVGWMFLDGGLR, FLTVFSYIEIIAGLFIIIGLL, LAALGALAMSVGFAPAYWLGS, and IGALLTAGSVTLMLTAAGRVW.

Heterodimer of a large and a small subunit in a 2:2 stoichiometry. TQO may associate with the terminal oxidase formed by doxBCE.

The protein localises to the cell membrane. It catalyses the reaction 6-decylubiquinone + 2 thiosulfate = 6-decylubiquinol + tetrathionate. Inhibited by sulfite, metabisulfite and dithonite. TQO plays a role in sulfur oxidation and is proposed to couple sulfur oxidation to dioxygen reduction; caldariellaquinone or sulfolobus quinone seem to serve to transfer electrons to the electron transport chain terminal oxidase formed by DoxBCE. The sequence is that of Thiosulfate dehydrogenase [quinone] large subunit (doxD) from Acidianus ambivalens (Desulfurolobus ambivalens).